The sequence spans 598 residues: Kinesin-like protein klp-3 (598 aa).

2 coiled-coil regions span residues 19-66 and 89-118; these read EVEL…FIQG and GNLS…LETD. The segment at 133–155 is disordered; sequence ALSRDSSCSVPRSVSPQPTGDVI. Positions 136–150 are enriched in polar residues; sequence RDSSCSVPRSVSPQP. Residues 170–248 adopt a coiled-coil conformation; sequence HWKKLQRCAE…LVELNGNIRV (79 aa). One can recognise a Kinesin motor domain in the interval 245–565; sequence NIRVFYRIRP…VNFAEKIGQV (321 aa). 328–335 lines the ATP pocket; sequence GHTGSGKT. The disordered stretch occupies residues 569 to 598; sequence SGTMKREPTRRSMTGISSGQRREIPASPRK.

The protein belongs to the TRAFAC class myosin-kinesin ATPase superfamily. Kinesin family.

The protein localises to the cytoplasm. It is found in the cytoskeleton. In Caenorhabditis elegans, this protein is Kinesin-like protein klp-3 (klp-3).